The chain runs to 206 residues: Xanthine phosphoribosyltransferase (206 aa).

Xanthine is bound by residues Leu-28 and Asn-35. A 5-phospho-alpha-D-ribose 1-diphosphate-binding site is contributed by 136-140 (ANGQA). Lys-164 is a binding site for xanthine.

It belongs to the purine/pyrimidine phosphoribosyltransferase family. Xpt subfamily. Homodimer.

The protein resides in the cytoplasm. It catalyses the reaction XMP + diphosphate = xanthine + 5-phospho-alpha-D-ribose 1-diphosphate. Its pathway is purine metabolism; XMP biosynthesis via salvage pathway; XMP from xanthine: step 1/1. Converts the preformed base xanthine, a product of nucleic acid breakdown, to xanthosine 5'-monophosphate (XMP), so it can be reused for RNA or DNA synthesis. This Oenococcus oeni (strain ATCC BAA-331 / PSU-1) protein is Xanthine phosphoribosyltransferase.